Here is a 62-residue protein sequence, read N- to C-terminus: Potassium channel toxin alpha-KTx 6.21 (62 aa).

The N-terminal stretch at 1–24 (MNAKLIYLLLVVTTMMLTFDTTQA) is a signal peptide. 4 disulfides stabilise this stretch: cysteine 29-cysteine 50, cysteine 35-cysteine 55, cysteine 39-cysteine 57, and cysteine 45-cysteine 60. Valine amide is present on valine 61.

Belongs to the short scorpion toxin superfamily. Potassium channel inhibitor family. Alpha-KTx 06 subfamily. C-terminal amidation is important for activity. There is a 50-70-fold decrease in ability to inhibit Kv1.2/KCNA2 when the toxin is not amidated. This decrease may be explained by a 23-fold slower association rate (k(on)) together with a 2-fold faster dissociation rate (k(off)). In terms of tissue distribution, expressed by the venom gland.

The protein localises to the secreted. In terms of biological role, reversible blocker of voltage-gated potassium channels with fast binding and unbinding kinetics. Has highest activity on human voltage-gated potassium channel Kv1.2/KCNA2 channels (IC(50)=0.11-0.16 nM), whereas its affinity for other channels tested was in the nanomolar range (hKv1.1/KCNA1, IC(50)=253 nM; hKv1.3/KCNA3, IC(50)=91 nM; and hKCa3.1/KCNN4, IC(50)=70 nM). This Urodacus yaschenkoi (Inland robust scorpion) protein is Potassium channel toxin alpha-KTx 6.21.